A 143-amino-acid chain; its full sequence is MESTLGSDLARLVRVWRALIDQRLKPLELTQTHWVTLYNIHRLPPEQSQIQLAKAIGIEQPSLVRTLDQLEDKGLITRHTCANDRRAKRIKLTDGAEPVIREVADVISLTRCEILDGISADEVSLLANLIERLEQNIIHLQNK.

The region spanning 2–135 is the HTH marR-type domain; it reads ESTLGSDLAR…LANLIERLEQ (134 aa). Residues 49 to 72 constitute a DNA-binding region (H-T-H motif); sequence QIQLAKAIGIEQPSLVRTLDQLED.

It belongs to the SlyA family. Homodimer.

In terms of biological role, transcription regulator that can specifically activate or repress expression of target genes. The polypeptide is Transcriptional regulator SlyA (Edwardsiella ictaluri (strain 93-146)).